The chain runs to 859 residues: Protein FAM171A1 (859 aa).

The first 20 residues, 1–20 (MSGSTAVALLFCVLSCSVWG), serve as a signal peptide directing secretion. The Extracellular segment spans residues 21–307 (AGSKASHEHN…VTQDITSYHT (287 aa)). 3 N-linked (GlcNAc...) asparagine glycosylation sites follow: asparagine 163, asparagine 194, and asparagine 198. A helical membrane pass occupies residues 308–328 (IFLLAILGGIAFILLVLLCIL). Over 329 to 859 (LYYCRRKCLK…ERPLLAFNKK (531 aa)) the chain is Cytoplasmic. 3 disordered regions span residues 397–421 (SRDFGSREELLSHQEEKSRMSLDNL), 484–509 (TNHVTAGSKPNIQEQMHPVPSAPEPE), and 771–859 (QSPS…FNKK). Basic and acidic residues predominate over residues 400–416 (FGSREELLSHQEEKSRM). 2 stretches are compositionally biased toward polar residues: residues 484 to 497 (TNHVTAGSKPNIQE) and 797 to 806 (SGSQTPSLQE). The span at 838–852 (GENKKSPWQKREERP) shows a compositional bias: basic and acidic residues.

The protein belongs to the FAM171 family.

The protein localises to the cell membrane. Functionally, may be involved in the regulation of the cytoskeletal dynamics, plays a role in actin stress fiber formation. The polypeptide is Protein FAM171A1 (fam171a1) (Xenopus laevis (African clawed frog)).